We begin with the raw amino-acid sequence, 332 residues long: MKRLFSASLLAAGLALGGAAHAAQPLLNVSYDVMRDFYKEYNPAFQKYWKAEKGENITIQMSHGGSSKQARSVIDGLPADVITMNQATDIDALADNGGLVPKDWATRLPNNSAPFTSATVFIVRKGNPKALKDWPDLLKDGVQVVVPNPKTSGNGRYTYLSAWGYVLKNGGDENKAKEFVGKLFKQVPVLDTGGRAATTTFMQNQIGDVLVTFENEAEMIAREFGRGGFEVVYPSVSAEAEPPVAVVDKVVEKKGSRAQAEAYLKYLWSDEGQTIAANNYLRPRNPEILAKFADRFPKVDFFSVEKTFGDWRSVQKTHFIDGGVFDQIYSPN.

Positions 1-22 are cleaved as a signal peptide; the sequence is MKRLFSASLLAAGLALGGAAHA.

This sequence belongs to the prokaryotic sulfate-binding protein family.

The protein resides in the periplasm. In terms of biological role, binds thiosulfate specifically and with high affinity. Has no detectable affinity for sulfate. The sequence is that of Thiosulfate-binding protein from Pseudomonas aeruginosa (strain ATCC 15692 / DSM 22644 / CIP 104116 / JCM 14847 / LMG 12228 / 1C / PRS 101 / PAO1).